A 70-amino-acid polypeptide reads, in one-letter code: Dermaseptin-PH (70 aa).

An N-terminal signal peptide occupies residues 1-22; the sequence is MDILKKSLFLILFLGVVSLSIC. Residues 23–44 constitute a propeptide that is removed on maturation; the sequence is EEEKRENEEEMEQDDEQSEMKR. The residue at position 67 (Gln-67) is a Glutamine amide. Positions 68–70 are excised as a propeptide; it reads GGQ.

This sequence belongs to the frog skin active peptide (FSAP) family. As to expression, expressed by the skin glands.

Its subcellular location is the secreted. It localises to the target cell membrane. Its function is as follows. Antimicrobial peptide which inhibits the growth of Gram-negative (MIC=16-64 uM) and Gram-positive bacteria (MIC=32 uM), and pathogenic yeast Candida albicans (MIC=16 uM). Shows a broad-spectrum of anticancer activities against several cancer cell lines. Also shows slight cytotoxicity on human dermal microvascular endothelium cells (IC(50)=4.85 uM). Induces low hemolysis against horse erythrocytes. This is Dermaseptin-PH from Pithecopus hypochondrialis (Orange-legged leaf frog).